The following is a 347-amino-acid chain: NADH-ubiquinone oxidoreductase chain 2 (347 aa).

Helical transmembrane passes span 13–33 (VFTGTLITALSSHWFFAWLGL), 55–75 (AAIKYFLTQATASMIFLMAIL), 96–116 (LMIVTALAMKLGMAPFHFWVP), 122–142 (VPLTSGLLLLTWQKLAPISIM), 151–171 (TNILLTLSILSILVGSWGGLN), 178–198 (ILAYSSITHMGWMVAVLPYNP), 199–219 (NITILNLIIYITLTTTTFLIL), 237–257 (LTWLMPLISSTLLSLGGLPPL), 277–297 (IAPTIMAIISLLNLYFYARLI), and 326–346 (LPTLTILTALLLPISPLILSI).

This sequence belongs to the complex I subunit 2 family. Core subunit of respiratory chain NADH dehydrogenase (Complex I) which is composed of 45 different subunits. Interacts with TMEM242.

It localises to the mitochondrion inner membrane. The enzyme catalyses a ubiquinone + NADH + 5 H(+)(in) = a ubiquinol + NAD(+) + 4 H(+)(out). In terms of biological role, core subunit of the mitochondrial membrane respiratory chain NADH dehydrogenase (Complex I) which catalyzes electron transfer from NADH through the respiratory chain, using ubiquinone as an electron acceptor. Essential for the catalytic activity and assembly of complex I. This is NADH-ubiquinone oxidoreductase chain 2 from Pongo pygmaeus (Bornean orangutan).